The following is a 183-amino-acid chain: MMSKQLAAQVPAEPVVLGKMGSSYGIRGWLRVFSSTEDAESIFDYLPWFIQKAGQWQQVQLESWKHHNQDLIIKLKGVDDRDAANLLTNCEIVVDSSQLPALEEGDYYWKDLMGCQVVTAEGYDLGKVIDMMETGSNDVLVIKANLKDAFGIKERLVPFLDGQVIKKVDLATRTIEVDWDPGF.

The region spanning 104–183 (EGDYYWKDLM…TIEVDWDPGF (80 aa)) is the PRC barrel domain.

Belongs to the RimM family. Binds ribosomal protein uS19.

Its subcellular location is the cytoplasm. Functionally, an accessory protein needed during the final step in the assembly of 30S ribosomal subunit, possibly for assembly of the head region. Essential for efficient processing of 16S rRNA. May be needed both before and after RbfA during the maturation of 16S rRNA. It has affinity for free ribosomal 30S subunits but not for 70S ribosomes. This is Ribosome maturation factor RimM from Salmonella choleraesuis (strain SC-B67).